Consider the following 681-residue polypeptide: U3 small nucleolar ribonucleoprotein protein MPP10 (681 aa).

A phosphoserine mark is found at serine 61, serine 120, and serine 139. A compositionally biased stretch (acidic residues) spans 105–147 (SLLPESEEQEREEDGSEIEADDKEDLEDLEEEEVSDMGNDDPE). 2 disordered regions span residues 105–202 (SLLP…IVDD) and 216–364 (NIEK…EKRQ). The stretch at 109–138 (ESEEQEREEDGSEIEADDKEDLEDLEEEEV) forms a coiled coil. Over residues 148–162 (MGERAENSSKSDLRK) the composition is skewed to basic and acidic residues. Phosphoserine is present on residues serine 163, serine 167, and serine 171. Polar residues predominate over residues 180–190 (LEQQSKVQNKG). Composition is skewed to basic and acidic residues over residues 193-202 (KPREKSIVDD) and 216-226 (NIEKEEERKDD). Residues 205–239 (FKLSEMEAYLENIEKEEERKDDNDEEEEDIDFFED) adopt a coiled-coil conformation. The segment covering 227-247 (NDEEEEDIDFFEDIDSDEDEG) has biased composition (acidic residues). Serine 242 carries the phosphoserine modification. Residues 253-264 (KKLKSGKSSRNL) are compositionally biased toward basic residues. A phosphoserine mark is found at serine 275 and serine 289. A compositionally biased stretch (basic and acidic residues) spans 280–290 (TNVHDDELDSN). Coiled coils occupy residues 284–324 (DDEL…NKQH) and 348–382 (NVKKNSDEVKSSFEKRQEKMNEKIASLEKELLEKK). Positions 291–318 (KEDDEIAEEEAEELSISETDEDDDLQEN) are enriched in acidic residues. A compositionally biased stretch (basic and acidic residues) spans 319–329 (EDNKQHKESLK). Lysine 350 participates in a covalent cross-link: Glycyl lysine isopeptide (Lys-Gly) (interchain with G-Cter in SUMO2). Residues 351 to 364 (KNSDEVKSSFEKRQ) show a composition bias toward basic and acidic residues. Residues lysine 382 and lysine 394 each participate in a glycyl lysine isopeptide (Lys-Gly) (interchain with G-Cter in SUMO2) cross-link. Residues 469–490 (LAEIYEQEYIKLNQQKTAEEEN) are a coiled coil. Residue lysine 555 forms a Glycyl lysine isopeptide (Lys-Gly) (interchain with G-Cter in SUMO2) linkage. The segment covering 558–575 (NKAGDIKTAAEKTATDKK) has biased composition (basic and acidic residues). The segment at 558–606 (NKAGDIKTAAEKTATDKKRERRKKKYQKRMKIKEKEKRRKLLEKSSVDQ) is disordered. A coiled-coil region spans residues 574-604 (KKRERRKKKYQKRMKIKEKEKRRKLLEKSSV). The span at 576–598 (RERRKKKYQKRMKIKEKEKRRKL) shows a compositional bias: basic residues. Lysine 609 is subject to N6-acetyllysine. Glycyl lysine isopeptide (Lys-Gly) (interchain with G-Cter in SUMO2) cross-links involve residues lysine 632 and lysine 649. A coiled-coil region spans residues 648–670 (SKLQDQVKMQINDAKKTEKKKKK). Residues 660–681 (DAKKTEKKKKKRQDISVHKLKL) are disordered. Basic and acidic residues predominate over residues 672-681 (QDISVHKLKL).

This sequence belongs to the MPP10 family. In terms of assembly, part of the small subunit (SSU) processome, composed of more than 70 proteins and the RNA chaperone small nucleolar RNA (snoRNA) U3. Component of a heterotrimeric complex containing IMP3, IMP4 and MPHOSPH10. Interacts with IMP3 and IMP4. In terms of processing, phosphorylated in M (mitotic) phase.

It is found in the nucleus. The protein localises to the nucleolus. Its subcellular location is the chromosome. Component of the 60-80S U3 small nucleolar ribonucleoprotein (U3 snoRNP). Required for the early cleavages during pre-18S ribosomal RNA processing. Part of the small subunit (SSU) processome, first precursor of the small eukaryotic ribosomal subunit. During the assembly of the SSU processome in the nucleolus, many ribosome biogenesis factors, an RNA chaperone and ribosomal proteins associate with the nascent pre-rRNA and work in concert to generate RNA folding, modifications, rearrangements and cleavage as well as targeted degradation of pre-ribosomal RNA by the RNA exosome. The sequence is that of U3 small nucleolar ribonucleoprotein protein MPP10 from Homo sapiens (Human).